Consider the following 170-residue polypeptide: Small ribosomal subunit protein uS5 (170 aa).

Residues 12–75 (WSELLVSVRR…NAAKKSMIRV (64 aa)) form the S5 DRBM domain.

Belongs to the universal ribosomal protein uS5 family. As to quaternary structure, part of the 30S ribosomal subunit. Contacts proteins S4 and S8.

In terms of biological role, with S4 and S12 plays an important role in translational accuracy. Its function is as follows. Located at the back of the 30S subunit body where it stabilizes the conformation of the head with respect to the body. The sequence is that of Small ribosomal subunit protein uS5 from Wolbachia sp. subsp. Brugia malayi (strain TRS).